The primary structure comprises 222 residues: Eukaryotic translation initiation factor 4E-2 (222 aa).

The span at M1–E20 shows a compositional bias: basic and acidic residues. Positions M1–M35 are disordered. The span at V21–D33 shows a compositional bias: acidic residues. 2 EIF4G-binding regions span residues H47–E50 and F57–H93. MRNA is bound by residues K65–G70, K97, and W115–E116. A disulfide bond links C120 and C158. Residues Y141 to Q150 form an EIF4G-binding region. MRNA is bound by residues R165–K170 and K210–R214.

This sequence belongs to the eukaryotic initiation factor 4E family. As to quaternary structure, EIF4F is a multi-subunit complex, the composition of which varies with external and internal environmental conditions. It is composed of at least EIF4A, EIF4E and EIF4G. EIF4E is also known to interact with other partners. In higher plants two isoforms of EIF4F have been identified, named isoform EIF4F and isoform EIF(iso)4F. Isoform EIF4F has subunits p220 and p26, whereas isoform EIF(iso)4F has subunits p82 and p28. In terms of assembly, (Microbial infection) Interacts with potyvirus viral genome-linked protein (VPg); this interaction is possible in susceptible hosts but impaired in resistant plants. Post-translationally, according to the redox status, the Cys-120-Cys-158 disulfide bridge may have a role in regulating protein function by affecting its ability to bind capped mRNA. In terms of tissue distribution, strongly expressed in susceptible plants but not in resistant ones.

The protein resides in the nucleus. Its subcellular location is the cytoplasm. Functionally, component of the protein complex eIF4F, which is involved in the recognition of the mRNA cap, ATP-dependent unwinding of 5'-terminal secondary structure and recruitment of mRNA to the ribosome. Recognizes and binds the 7-methylguanosine-containing mRNA cap during an early step in the initiation of protein synthesis and facilitates ribosome binding by inducing the unwinding of the mRNAs secondary structures. Key component of recessive resistance to potyviruses. Its function is as follows. (Microbial infection) Susceptibility host factor required for viral infection (e.g. potato virus Y (PVY) and pepper mottle virus (PepMoV)) by recruiting viral RNAs to the host ribosomal complex via an interaction with viral genome-linked protein (VPg). In Nicotiana tabacum (Common tobacco), this protein is Eukaryotic translation initiation factor 4E-2.